The sequence spans 179 residues: Large ribosomal subunit protein uL6 (179 aa).

It belongs to the universal ribosomal protein uL6 family. Part of the 50S ribosomal subunit.

Its function is as follows. This protein binds to the 23S rRNA, and is important in its secondary structure. It is located near the subunit interface in the base of the L7/L12 stalk, and near the tRNA binding site of the peptidyltransferase center. The sequence is that of Large ribosomal subunit protein uL6 from Bifidobacterium animalis subsp. lactis (strain AD011).